Consider the following 286-residue polypeptide: ATP synthase gamma chain (286 aa).

The protein belongs to the ATPase gamma chain family. F-type ATPases have 2 components, CF(1) - the catalytic core - and CF(0) - the membrane proton channel. CF(1) has five subunits: alpha(3), beta(3), gamma(1), delta(1), epsilon(1). CF(0) has three main subunits: a, b and c.

It is found in the cell inner membrane. Functionally, produces ATP from ADP in the presence of a proton gradient across the membrane. The gamma chain is believed to be important in regulating ATPase activity and the flow of protons through the CF(0) complex. The polypeptide is ATP synthase gamma chain (Pseudomonas entomophila (strain L48)).